A 436-amino-acid chain; its full sequence is 4-hydroxyphenylpyruvate dioxygenase (436 aa).

VOC domains are found at residues 38–194 and 210–370; these read RFHH…GFEV and RLDH…IFTK. Fe cation-binding residues include His-213, His-295, and Glu-381.

The protein belongs to the 4HPPD family. Fe cation serves as cofactor.

It localises to the cytoplasm. It catalyses the reaction 3-(4-hydroxyphenyl)pyruvate + O2 = homogentisate + CO2. Its pathway is amino-acid degradation; L-phenylalanine degradation; acetoacetate and fumarate from L-phenylalanine: step 3/6. It participates in cofactor biosynthesis; prenylquinone biosynthesis. In Plectranthus scutellarioides (Coleus), this protein is 4-hydroxyphenylpyruvate dioxygenase.